The following is a 62-amino-acid chain: UPF0434 protein Avi_4243 (62 aa).

This sequence belongs to the UPF0434 family.

This chain is UPF0434 protein Avi_4243, found in Allorhizobium ampelinum (strain ATCC BAA-846 / DSM 112012 / S4) (Agrobacterium vitis (strain S4)).